We begin with the raw amino-acid sequence, 105 residues long: uncharacterized protein (105 aa).

The disordered stretch occupies residues 58–105; it reads YRKKKPNHSRDNPRINSNLSTNYAQAKSVERSRSNSLNSGPNPLENAT. Composition is skewed to polar residues over residues 71-82 and 91-105; these read RINSNLSTNYAQ and SNSL…ENAT.

The protein localises to the mitochondrion. This is an uncharacterized protein from Arabidopsis thaliana (Mouse-ear cress).